The primary structure comprises 554 residues: MFS-type transporter tstD (554 aa).

2 stretches are compositionally biased toward polar residues: residues 1–10 (MPEPFNSTMP) and 27–38 (QDSNQPPEMSAS). The interval 1–68 (MPEPFNSTMP…ESENNEPYSV (68 aa)) is disordered. N6 carries N-linked (GlcNAc...) asparagine glycosylation. Basic and acidic residues predominate over residues 39 to 48 (SEKKHPENEN). Residues 76–96 (LMVLAASLAGFFSPLSASIYY) form a helical membrane-spanning segment. N-linked (GlcNAc...) asparagine glycosylation is found at N107 and N114. 5 helical membrane-spanning segments follow: residues 115–135 (LTVT…ASFS), 142–162 (PGYA…ALQN), 173–193 (LQSA…SDII), 202–222 (IAFA…IGGL), and 231–251 (WIFW…FLFF). The interval 281 to 300 (KEKQRQQRAENEEENANRQR) is disordered. Helical transmembrane passes span 311–331 (VFVV…GVAF), 354–374 (IKVA…ALST), and 413–433 (IALP…WLMT). N-linked (GlcNAc...) asparagine glycosylation is present at N437. The next 3 membrane-spanning stretches (helical) occupy residues 442 to 462 (IILL…LNVL), 473 to 493 (MVTA…AAMI), and 504 to 524 (WSYT…LLTM).

It belongs to the major facilitator superfamily.

It localises to the membrane. In terms of biological role, MFS-type transporter; part of the gene cluster that mediates the biosynthesis of the antihypercholesterolemic agents phomoidrides which are dimeric anhydrides. The protein is MFS-type transporter tstD of Talaromyces stipitatus (strain ATCC 10500 / CBS 375.48 / QM 6759 / NRRL 1006) (Penicillium stipitatum).